The following is a 342-amino-acid chain: MKALAKLERAPGLTLTRVKRPEVGHNDVLIKIRRTAICGTDIHIWKWDDWAQKTIPVPMHVGHEYVGEIVEMGQEVRGFAIGDRVSGEGHITCGFCRNCRAGRRHLCRNTVGVGVNREGAFAEYLAIPAFNAFKIPPEISDDLASIFDPFGNATHTALSFNLVGEDVLITGAGPIGIMAVAIAKHVGARNVVITDINDYRLELARKMGATRAVNVARESLRDVMAELRMTEGFDVGLEMSGVPSAFTSLLEAMNHGGKVALLGIPPAQTAIDWNQVIFKGLEIKGIYGREMFETWYKMVAMLQSGLDLSPIVTHRFAVDDYEKGFAAMLSGESGKVILDWTA.

C38 is a Zn(2+) binding site. Active-site charge relay system residues include T40 and H43. H63, E64, C93, C96, C99, and C107 together coordinate Zn(2+). NAD(+) contacts are provided by residues I175, D195, R200, 262–264, and 286–287; these read LGI and IY.

The protein belongs to the zinc-containing alcohol dehydrogenase family. As to quaternary structure, homotetramer. Zn(2+) is required as a cofactor.

The protein resides in the cytoplasm. The enzyme catalyses L-threonine + NAD(+) = (2S)-2-amino-3-oxobutanoate + NADH + H(+). It functions in the pathway amino-acid degradation; L-threonine degradation via oxydo-reductase pathway; glycine from L-threonine: step 1/2. Catalyzes the NAD(+)-dependent oxidation of L-threonine to 2-amino-3-ketobutyrate. In Burkholderia vietnamiensis (strain G4 / LMG 22486) (Burkholderia cepacia (strain R1808)), this protein is L-threonine 3-dehydrogenase.